Consider the following 676-residue polypeptide: MSTLPPGTAPIKPQYLLSTKPQAIPDDDAAEGTTSIVKSAGRGEDDSGNGQPSRRALAKAQKKARQGANKGRRFGKVRDEVELCWKVANGAICDFGTSCRFTHDIAEYIKEKPQDLRIPLLSEFKESPPYGPDLTVIGKPGKKHPNIDFSTKCPVHEESGECRYGYKCRYMGGHALEDEEGNVTLVADEDKKAQVALTSHEINFVGGDVQKQLRSKKYPTPIASAYLEELKSMNDEAQKPQAVVSETTVMETDEAQPSSTDAVASEATQNGTEPAPAEEVISKRVGGVQSGKDEPDVPMRFSEKRRLDWKGKTYLAPLTTVGNLPFRRMCVKLGADITCGEMGLATSFLAGSKEEWSLVRRHPSEKIFGIQVAGNKPHTLVPTAEVIAKEFPTGVDFVDLNCGCPIDLVFKAGSGSALLDNAGKLGKIIQGMNRALGEIPLTVKIRTGVKEGRNNAHKLMPRISAEWSASAITLHGRTRQQRYTKLADWDYIKECVAAVRAREADEDLPPVPIFGGGDCFSSQDYWEKINNYGVDGVMIGRGALIKPWIFTEIKERREWDISATERLQLIRDYVEYGLNHFGSDTAGVNTTRRYLCEALSFQYRYVPIGLLERLPAKINERAPAFVGRSDLETLLASPDSQDWVKISEMFLGPAPQSWVFTPKHKSNAYGSEEGQG.

Residues 1–72 (MSTLPPGTAP…KARQGANKGR (72 aa)) are disordered. A compositionally biased stretch (basic residues) spans 56–72 (ALAKAQKKARQGANKGR). C3H1-type zinc fingers lie at residues 78 to 106 (RDEVELCWKVANGAICDFGTSCRFTHDIA) and 152 to 177 (KCPVHEESGECRYGYKCRYMGGHALE). Polar residues predominate over residues 253 to 272 (DEAQPSSTDAVASEATQNGT). The interval 253-298 (DEAQPSSTDAVASEATQNGTEPAPAEEVISKRVGGVQSGKDEPDVP) is disordered. Residues 317 to 319 (PLT) and Gln371 each bind FMN. Cys404 (proton donor) is an active-site residue. Residues Lys444, His475, 516-518 (GGD), and 540-541 (GR) each bind FMN.

This sequence belongs to the Dus family. Dus3 subfamily. FMN serves as cofactor.

The protein resides in the cytoplasm. Its subcellular location is the nucleus. It carries out the reaction 5,6-dihydrouridine(47) in tRNA + NAD(+) = uridine(47) in tRNA + NADH + H(+). The catalysed reaction is 5,6-dihydrouridine(47) in tRNA + NADP(+) = uridine(47) in tRNA + NADPH + H(+). The enzyme catalyses a 5,6-dihydrouridine in mRNA + NAD(+) = a uridine in mRNA + NADH + H(+). It catalyses the reaction a 5,6-dihydrouridine in mRNA + NADP(+) = a uridine in mRNA + NADPH + H(+). In terms of biological role, catalyzes the synthesis of dihydrouridine, a modified base found in the D-loop of most tRNAs. Specifically modifies U47 in cytoplasmic tRNAs. Catalyzes the synthesis of dihydrouridine in some mRNAs, thereby affecting their translation. The polypeptide is tRNA-dihydrouridine(47) synthase [NAD(P)(+)] (DUS3) (Coprinopsis cinerea (strain Okayama-7 / 130 / ATCC MYA-4618 / FGSC 9003) (Inky cap fungus)).